A 649-amino-acid chain; its full sequence is MALVTVSRSPPASGHSTPVGPTQDRVVRRRGRLQRRQSFAVLRGAVLGLQDGGDSNVASEADSEPMEEPSGEEQPTEDQTDKGQGLQSPWKQVQKRHLHLMVELLRPQDDIRLAAQLEAARPPRLRYLLVVSTGEELSEEAILLGVDFPDSSSHSCTLGLVLPLWSDTQVYLDGDGGFSVTSGGQSRIFKPVSIQTMWATLQVLHQACEVALGSGLVPGGSALAWATYYQEKLNSDQGCLNEWMAMSDLESFRPPNAEPGQASEQEKMEQAILAELWQVLDTSDLDSVTSKEIRQALELRLGCPLQQYRDFIDNQMLLLMAQQDRASRIFPHLYLGSEWNAANLEELQKNRVSHILNMAREIDNFFPERFTYYNVRVWDEESAQLLPHWKETHRFIEDARAQGTRVLVHCKMGVSRSAATVLAYAMKQYGWDLEQALIHVQELRPIVRPNHGFLRQLRTYQGILTASRQSHVWEQKVGVVSPEEPLAPEVSTPLPPLPPEPGGSGEVMVMGLEGSQETPKEELGLRPRINLRGVMRSISLLEPSESESTPEAGGLPEVFSSDEEPLHPFSQLSRAKGGQRVRKGPWPALKSRQSVVALHSAALVASRTRAFQEQGQGQEQSEPGMSSTPRLRKVMRQASVDDSREEDKA.

Residues 1-20 show a composition bias toward polar residues; it reads MALVTVSRSPPASGHSTPVG. Residues 1 to 32 are disordered; that stretch reads MALVTVSRSPPASGHSTPVGPTQDRVVRRRGR. Ala2 bears the N-acetylalanine mark. 2 positions are modified to phosphoserine: Ser9 and Ser38. A disordered region spans residues 49–90; sequence LQDGGDSNVASEADSEPMEEPSGEEQPTEDQTDKGQGLQSPW. A compositionally biased stretch (acidic residues) spans 61–78; sequence ADSEPMEEPSGEEQPTED. Ser88 carries the post-translational modification Phosphoserine. Residues 266 to 321 form the DEK-C domain; that stretch reads EKMEQAILAELWQVLDTSDLDSVTSKEIRQALELRLGCPLQQYRDFIDNQMLLLMA. One can recognise a Tyrosine-protein phosphatase domain in the interval 325–466; the sequence is RASRIFPHLY…LRTYQGILTA (142 aa). Residue Cys410 is the Phosphocysteine intermediate of the active site. Low complexity-rich tracts occupy residues 541 to 551 and 608 to 627; these read LEPSESESTPE and TRAFQEQGQGQEQSEPGMSS. Disordered regions lie at residues 541 to 586 and 608 to 649; these read LEPS…KGPW and TRAF…EDKA. Positions 639–649 are enriched in basic and acidic residues; that stretch reads SVDDSREEDKA.

Belongs to the protein-tyrosine phosphatase family. In terms of assembly, does not bind to, or colocalize with, filamentous actin. As to expression, expressed in brain, small intestine and testis. Also expressed at lower levels in heart, kidney, liver, spleen and thymus.

It localises to the cytoplasm. The protein localises to the cytoskeleton. Its subcellular location is the nucleus. It carries out the reaction O-phospho-L-tyrosyl-[protein] + H2O = L-tyrosyl-[protein] + phosphate. The enzyme catalyses O-phospho-L-seryl-[protein] + H2O = L-seryl-[protein] + phosphate. The catalysed reaction is O-phospho-L-threonyl-[protein] + H2O = L-threonyl-[protein] + phosphate. Functionally, protein phosphatase which may play a role in the regulation of actin filament dynamics. Can dephosphorylate and activate the actin binding/depolymerizing factor cofilin, which subsequently binds to actin filaments and stimulates their disassembly. This Mus musculus (Mouse) protein is Protein phosphatase Slingshot homolog 3 (Ssh3).